Here is an 87-residue protein sequence, read N- to C-terminus: Small ribosomal subunit protein bS20 (87 aa).

A compositionally biased stretch (basic residues) spans 1–11 (MANHKSALKRI). The segment at 1–23 (MANHKSALKRIKQTEKRTERNRH) is disordered.

It belongs to the bacterial ribosomal protein bS20 family.

Binds directly to 16S ribosomal RNA. This chain is Small ribosomal subunit protein bS20, found in Geotalea uraniireducens (strain Rf4) (Geobacter uraniireducens).